The primary structure comprises 363 residues: UDP-3-O-acylglucosamine N-acyltransferase (363 aa).

His-266 (proton acceptor) is an active-site residue.

It belongs to the transferase hexapeptide repeat family. LpxD subfamily. As to quaternary structure, homotrimer.

It catalyses the reaction a UDP-3-O-[(3R)-3-hydroxyacyl]-alpha-D-glucosamine + a (3R)-hydroxyacyl-[ACP] = a UDP-2-N,3-O-bis[(3R)-3-hydroxyacyl]-alpha-D-glucosamine + holo-[ACP] + H(+). Its pathway is bacterial outer membrane biogenesis; LPS lipid A biosynthesis. Functionally, catalyzes the N-acylation of UDP-3-O-acylglucosamine using 3-hydroxyacyl-ACP as the acyl donor. Is involved in the biosynthesis of lipid A, a phosphorylated glycolipid that anchors the lipopolysaccharide to the outer membrane of the cell. This is UDP-3-O-acylglucosamine N-acyltransferase from Bordetella pertussis (strain Tohama I / ATCC BAA-589 / NCTC 13251).